The chain runs to 377 residues: Queuine tRNA-ribosyltransferase (377 aa).

D91 functions as the Proton acceptor in the catalytic mechanism. Residues 91–95 (DSGGF), D145, Q189, and G216 contribute to the substrate site. Residues 247–253 (GVGKPED) are RNA binding. Residue D266 is the Nucleophile of the active site. The tract at residues 271–275 (TRNAR) is RNA binding; important for wobble base 34 recognition. C304, C306, C309, and H335 together coordinate Zn(2+).

Belongs to the queuine tRNA-ribosyltransferase family. Homodimer. Within each dimer, one monomer is responsible for RNA recognition and catalysis, while the other monomer binds to the replacement base PreQ1. Requires Zn(2+) as cofactor.

It carries out the reaction 7-aminomethyl-7-carbaguanine + guanosine(34) in tRNA = 7-aminomethyl-7-carbaguanosine(34) in tRNA + guanine. The protein operates within tRNA modification; tRNA-queuosine biosynthesis. Its function is as follows. Catalyzes the base-exchange of a guanine (G) residue with the queuine precursor 7-aminomethyl-7-deazaguanine (PreQ1) at position 34 (anticodon wobble position) in tRNAs with GU(N) anticodons (tRNA-Asp, -Asn, -His and -Tyr). Catalysis occurs through a double-displacement mechanism. The nucleophile active site attacks the C1' of nucleotide 34 to detach the guanine base from the RNA, forming a covalent enzyme-RNA intermediate. The proton acceptor active site deprotonates the incoming PreQ1, allowing a nucleophilic attack on the C1' of the ribose to form the product. After dissociation, two additional enzymatic reactions on the tRNA convert PreQ1 to queuine (Q), resulting in the hypermodified nucleoside queuosine (7-(((4,5-cis-dihydroxy-2-cyclopenten-1-yl)amino)methyl)-7-deazaguanosine). The protein is Queuine tRNA-ribosyltransferase of Vibrio parahaemolyticus serotype O3:K6 (strain RIMD 2210633).